A 146-amino-acid chain; its full sequence is Angiogenin (146 aa).

The signal sequence occupies residues 1-24; that stretch reads MVMGLGLFLLVFMLGLGLTPPTLA. Gln-25 carries the pyrrolidone carboxylic acid modification. His-37 (proton acceptor) is an active-site residue. Arg-45 contributes to the tRNA binding site. Cystine bridges form between Cys-50–Cys-105, Cys-63–Cys-116, and Cys-81–Cys-131. The Nucleolar localization signal motif lies at 55-59; the sequence is RRRHL. Residues Cys-105 and Ile-127 each contribute to the tRNA site. His-138 acts as the Proton donor in catalysis.

The protein belongs to the pancreatic ribonuclease family. In terms of assembly, homodimer. Interacts with RNH1; inhibiting ANG ribonuclease activity. Interacts with PCNA.

It localises to the secreted. The protein resides in the nucleus. Its subcellular location is the nucleolus. It is found in the cytoplasm. The protein localises to the stress granule. With respect to regulation, has weak tRNA ribonuclease activity by itself due to partial autoinhibition by its C-terminus, which folds into a short alpha-helix that partially occludes the substrate-binding site. In absence of stress, the ribonuclease activity is inhibited by RNH1 in the cytoplasm. In response to stress, dissociates from RNH1 in the cytoplasm and associates with cytoplasmic ribosomes with vacant A-sites: ribosomes directly activate the tRNA ribonuclease activity of ANG by refolding the C-terminal alpha-helix. In response to stress, the angiogenic activity of ANG is inhibited by RNH1 in the nucleus. Functionally, secreted ribonuclease that can either promote or restrict cell proliferation of target cells, depending on the context. Endocytosed in target cells via its receptor PLXNB2 and translocates to the cytoplasm or nucleus. Under stress conditions, localizes to the cytoplasm and promotes the assembly of stress granules (SGs): specifically cleaves a subset of tRNAs within anticodon loops to produce tRNA-derived stress-induced fragments (tiRNAs), resulting in translation repression and inhibition of cell proliferation. tiRNas also prevent formation of apoptosome, thereby promoting cell survival. Preferentially cleaves RNAs between a pyrimidine and an adenosine residue, suggesting that it cleaves the anticodon loop of tRNA(Ala) (32-UUAGCAU-38) after positions 33 and 36. Cleaves a subset of tRNAs, including tRNA(Ala), tRNA(Glu), tRNA(Gly), tRNA(Lys), tRNA(Val), tRNA(His), tRNA(Asp) and tRNA(Sec). Under growth conditions and in differentiated cells, translocates to the nucleus and stimulates ribosomal RNA (rRNA) transcription, including that containing the initiation site sequences of 45S rRNA, thereby promoting cell growth and proliferation. Angiogenin induces vascularization of normal and malignant tissues via its ability to promote rRNA transcription. Involved in hematopoietic stem and progenitor cell (HSPC) growth and survival by promoting rRNA transcription in growth conditions and inhibiting translation in response to stress, respectively. Mediates the crosstalk between myeloid and intestinal epithelial cells to protect the intestinal epithelial barrier integrity: secreted by myeloid cells and promotes intestinal epithelial cells proliferation and survival. Also mediates osteoclast-endothelial cell crosstalk in growing bone: produced by osteoclasts and protects the neighboring vascular cells against senescence by promoting rRNA transcription. This is Angiogenin (ANG) from Macaca mulatta (Rhesus macaque).